The sequence spans 291 residues: Halorhodopsin (291 aa).

Residues 1-30 (MTETLPPVTESAVALQAEVTQRELFEFVLN) lie on the Extracellular side of the membrane. The helical transmembrane segment at 31 to 56 (DPLLASSLYINIALAGLSILLFVFMT) threads the bilayer. Residues 57–62 (RGLDDP) are Cytoplasmic-facing. The chain crosses the membrane as a helical span at residues 63 to 86 (RAKLIAVSTILVPVVSIASYTGLA). The Extracellular segment spans residues 87-120 (SGLTISVLEMPAGHFAEGSSVMLGGEEVDGVVTM). The helical transmembrane segment at 121–142 (WGRYLTWALSTPMILLALGLLA) threads the bilayer. At 143–145 (GSN) the chain is on the cytoplasmic side. A helical membrane pass occupies residues 146–169 (ATKLFTAITFDIAMCVTGLAAALT). Over 170–172 (TSS) the chain is Extracellular. The chain crosses the membrane as a helical span at residues 173–195 (HLMRWFWYAISCACFLVVLYILL). Residues 196–207 (VEWAQDAKAAGT) are Cytoplasmic-facing. Residues 208–231 (ADMFNTLKLLTVVMWLGYPIVWAL) form a helical membrane-spanning segment. Residues 232–240 (GVEGIAVLP) are Extracellular-facing. A helical membrane pass occupies residues 241-269 (VGVTSWGYSFLDIVAKYIFAFLLLNYLTS). Position 256 is an N6-(retinylidene)lysine (Lys256). The Cytoplasmic portion of the chain corresponds to 270-291 (NESVVSGSILDVPSASGTPADD).

This sequence belongs to the archaeal/bacterial/fungal opsin family.

It is found in the cell membrane. In terms of biological role, light-driven anion pump. Binding affinity for the anions is in the order, bromide &gt; chloride &gt; nitrate &gt; azide &gt; bromate and binding is pH dependent. The chain is Halorhodopsin (hop) from Natronomonas pharaonis (Natronobacterium pharaonis).